The following is a 696-amino-acid chain: Gametogenetin-binding protein 2 (696 aa).

Phosphoserine occurs at positions 360 and 602.

In terms of assembly, interacts with isoform 1 of GGN. In terms of tissue distribution, testis-specific.

It localises to the cytoplasmic vesicle. In terms of biological role, may be involved in spermatogenesis. This is Gametogenetin-binding protein 2 (Ggnbp2) from Mus musculus (Mouse).